Reading from the N-terminus, the 144-residue chain is Large ribosomal subunit protein uL15 (144 aa).

The segment covering 1–12 (MRLNTLSPSLGS) has biased composition (polar residues). A disordered region spans residues 1–51 (MRLNTLSPSLGSRKNHKRLGRGIGSGFGKTAGRGHKGQKSRSGGHVNRGFE). The segment covering 21–31 (RGIGSGFGKTA) has biased composition (gly residues).

Belongs to the universal ribosomal protein uL15 family. Part of the 50S ribosomal subunit.

Its function is as follows. Binds to the 23S rRNA. The chain is Large ribosomal subunit protein uL15 from Buchnera aphidicola subsp. Schizaphis graminum (strain Sg).